The primary structure comprises 200 residues: GTP cyclohydrolase 1 (200 aa).

Zn(2+)-binding residues include cysteine 87, histidine 90, and cysteine 158.

Belongs to the GTP cyclohydrolase I family. In terms of assembly, toroid-shaped homodecamer, composed of two pentamers of five dimers.

The enzyme catalyses GTP + H2O = 7,8-dihydroneopterin 3'-triphosphate + formate + H(+). It participates in cofactor biosynthesis; 7,8-dihydroneopterin triphosphate biosynthesis; 7,8-dihydroneopterin triphosphate from GTP: step 1/1. This chain is GTP cyclohydrolase 1, found in Xanthomonas campestris pv. campestris (strain ATCC 33913 / DSM 3586 / NCPPB 528 / LMG 568 / P 25).